Consider the following 445-residue polypeptide: Argininosuccinate synthase (445 aa).

Residues 17 to 25 and Ala-43 each bind ATP; that span reads AFSGGLDTS. Residue Tyr-99 coordinates L-citrulline. ATP is bound by residues Gly-129 and Thr-131. The L-aspartate site is built by Thr-131, Asn-135, and Asp-136. Asn-135 contributes to the L-citrulline binding site. Asp-136 contacts ATP. Positions 139 and 192 each coordinate L-citrulline. Asp-194 lines the ATP pocket. Positions 201, 203, and 280 each coordinate L-citrulline.

This sequence belongs to the argininosuccinate synthase family. Type 2 subfamily. Homotetramer.

The protein localises to the cytoplasm. The enzyme catalyses L-citrulline + L-aspartate + ATP = 2-(N(omega)-L-arginino)succinate + AMP + diphosphate + H(+). It functions in the pathway amino-acid biosynthesis; L-arginine biosynthesis; L-arginine from L-ornithine and carbamoyl phosphate: step 2/3. This chain is Argininosuccinate synthase, found in Bordetella bronchiseptica (strain ATCC BAA-588 / NCTC 13252 / RB50) (Alcaligenes bronchisepticus).